The following is a 456-amino-acid chain: RuvB-like helicase 1 (456 aa).

71 to 78 (GGAGTGKT) is a binding site for ATP.

Belongs to the RuvB family. May form heterododecamers with RVB2. Component of the SWR1 chromatin remodeling complex, the INO80 chromatin remodeling complex, and of the R2TP complex.

It localises to the nucleus. The catalysed reaction is ATP + H2O = ADP + phosphate + H(+). DNA helicase which participates in several chromatin remodeling complexes, including the SWR1 and the INO80 complexes. The SWR1 complex mediates the ATP-dependent exchange of histone H2A for the H2A variant HZT1 leading to transcriptional regulation of selected genes by chromatin remodeling. The INO80 complex remodels chromatin by shifting nucleosomes and is involved in DNA repair. Also involved in pre-rRNA processing. This is RuvB-like helicase 1 (rvb1) from Schizosaccharomyces pombe (strain 972 / ATCC 24843) (Fission yeast).